The primary structure comprises 265 residues: Insulin-like growth factor-binding protein 5 (265 aa).

An N-terminal signal peptide occupies residues 1 to 21 (MEMLLPMCLLLVSLCLGQCQA). The IGFBP N-terminal domain maps to 24-104 (SFVHCEPCDD…LHGRGVCLNL (81 aa)). 6 disulfides stabilise this stretch: cysteine 28–cysteine 54, cysteine 31–cysteine 56, cysteine 39–cysteine 57, cysteine 46–cysteine 60, cysteine 68–cysteine 81, and cysteine 75–cysteine 101. Positions 111-121 (SKIDRESREED) are enriched in basic and acidic residues. The interval 111-137 (SKIDRESREEDPTTSETEDIYQSKHRG) is disordered. Residues 182–256 (MGPCRRQVET…IDYVNGDLQC (75 aa)) enclose the Thyroglobulin type-1 domain. Cystine bridges form between cysteine 185–cysteine 212, cysteine 223–cysteine 234, and cysteine 236–cysteine 256.

Its subcellular location is the secreted. In terms of biological role, IGF-binding proteins prolong the half-life of the IGFs and have been shown to either inhibit or stimulate the growth promoting effects of the IGFs on cell culture. They alter the interaction of IGFs with their cell surface receptors. Promotes anterior neural development by stimulating insulin growth factor (IGF) signaling via IGF receptors. The sequence is that of Insulin-like growth factor-binding protein 5 from Xenopus laevis (African clawed frog).